A 543-amino-acid polypeptide reads, in one-letter code: Chaperonin GroEL (543 aa).

ATP-binding positions include 30 to 33, lysine 51, 87 to 91, glycine 415, 480 to 482, and aspartate 496; these read TLGP, DGTTT, and NAL.

The protein belongs to the chaperonin (HSP60) family. Forms a cylinder of 14 subunits composed of two heptameric rings stacked back-to-back. Interacts with the co-chaperonin GroES.

Its subcellular location is the cytoplasm. It carries out the reaction ATP + H2O + a folded polypeptide = ADP + phosphate + an unfolded polypeptide.. Together with its co-chaperonin GroES, plays an essential role in assisting protein folding. The GroEL-GroES system forms a nano-cage that allows encapsulation of the non-native substrate proteins and provides a physical environment optimized to promote and accelerate protein folding. The sequence is that of Chaperonin GroEL from Gemmatimonas aurantiaca (strain DSM 14586 / JCM 11422 / NBRC 100505 / T-27).